A 417-amino-acid chain; its full sequence is Phosphoglycerate kinase (417 aa).

Residues V23, D24, F25, N26, Q39, R40, S63, H64, G66, R67, L122, R123, H170, and R171 each coordinate (2R)-3-phosphoglycerate. G214 provides a ligand contact to ADP. G214 provides a ligand contact to CDP. Residues A215 and K216 each coordinate AMP. Residue A215 coordinates ATP. A215 contributes to the Mg(2+) binding site. D219 is a binding site for CDP. A Mg(2+)-binding site is contributed by D219. K220 contributes to the AMP binding site. K220 serves as a coordination point for ATP. G238 is a binding site for ADP. Position 238 (G238) interacts with CDP. Residues G239 and G313 each coordinate AMP. Residues G239 and G313 each contribute to the ATP site. Residues G338 and F343 each contribute to the CDP site. F343 lines the ADP pocket. Residue E344 coordinates AMP. ATP is bound by residues E344, D375, and T376. D375 is a binding site for Mg(2+).

Belongs to the phosphoglycerate kinase family. Monomer. Mg(2+) serves as cofactor.

The protein resides in the cytoplasm. The protein localises to the mitochondrion. It carries out the reaction (2R)-3-phosphoglycerate + ATP = (2R)-3-phospho-glyceroyl phosphate + ADP. It functions in the pathway carbohydrate degradation; glycolysis; pyruvate from D-glyceraldehyde 3-phosphate: step 2/5. Its function is as follows. Catalyzes one of the two ATP producing reactions in the glycolytic pathway via the reversible conversion of 1,3-diphosphoglycerate to 3-phosphoglycerate. Both L- and D- forms of purine and pyrimidine nucleotides can be used as substrates, but the activity is much lower on pyrimidines. Negatively regulates the biosynthesis of acetyl-CoA from pyruvate in the mitochondrion. This is Phosphoglycerate kinase (PGKA) from Penicillium citrinum.